The following is a 126-amino-acid chain: MAQLPPGDIATMPNQKVVFNAPFDNKATYYVRVINPGTNRIGFAFKTTKPKRINMNPPNGVLGPKESVNVAISCDAFDPSSEDTKGDRVTVEWCNTPDPAAAAFKLEWFQGDGMVRRKNLPIEYNV.

Alanine 2 bears the N-acetylalanine mark. Residues 8–125 form the MSP domain; it reads DIATMPNQKV…RRKNLPIEYN (118 aa).

As to expression, sperm.

It is found in the cell projection. The protein localises to the pseudopodium. The protein resides in the cytoplasm. Its subcellular location is the cytoskeleton. Its function is as follows. Central component in molecular interactions underlying sperm crawling. Forms an extensive filament system that extends from sperm villipoda, along the leading edge of the pseudopod. The protein is Major sperm protein 2 (MSP-2) of Globodera rostochiensis (Golden nematode worm).